The sequence spans 207 residues: Large ribosomal subunit protein uL4 (207 aa).

Residues 48-86 (THKVKNRSEVRGGGRKPWRQKGTGRARQGSIRSPQWRGG) form a disordered region. A compositionally biased stretch (basic residues) spans 60–71 (GGRKPWRQKGTG).

Belongs to the universal ribosomal protein uL4 family. In terms of assembly, part of the 50S ribosomal subunit.

Functionally, one of the primary rRNA binding proteins, this protein initially binds near the 5'-end of the 23S rRNA. It is important during the early stages of 50S assembly. It makes multiple contacts with different domains of the 23S rRNA in the assembled 50S subunit and ribosome. In terms of biological role, forms part of the polypeptide exit tunnel. The polypeptide is Large ribosomal subunit protein uL4 (Bacillus licheniformis (strain ATCC 14580 / DSM 13 / JCM 2505 / CCUG 7422 / NBRC 12200 / NCIMB 9375 / NCTC 10341 / NRRL NRS-1264 / Gibson 46)).